The primary structure comprises 320 residues: Peroxidase 66 (320 aa).

The signal sequence occupies residues 1 to 29 (MAASVSASCLNRLSSLAVVLVALASAASA). Pyrrolidone carboxylic acid is present on Gln-30. Cystine bridges form between Cys-40–Cys-118, Cys-73–Cys-78, Cys-124–Cys-315, and Cys-202–Cys-227. Residue His-71 is the Proton acceptor of the active site. Residues Asp-72, Val-75, Gly-77, Asp-79, and Ser-81 each coordinate Ca(2+). N-linked (GlcNAc...) asparagine glycosylation is found at Asn-85 and Asn-96. Position 165 (Pro-165) interacts with substrate. His-195 contacts heme b. Thr-196 contributes to the Ca(2+) binding site. A glycan (N-linked (GlcNAc...) asparagine) is linked at Asn-211. Ca(2+)-binding residues include Asp-239, Thr-242, and Asp-247.

This sequence belongs to the peroxidase family. Classical plant (class III) peroxidase subfamily. Heme b is required as a cofactor. The cofactor is Ca(2+).

The protein localises to the secreted. It catalyses the reaction 2 a phenolic donor + H2O2 = 2 a phenolic radical donor + 2 H2O. In terms of biological role, removal of H(2)O(2), oxidation of toxic reductants, biosynthesis and degradation of lignin, suberization, auxin catabolism, response to environmental stresses such as wounding, pathogen attack and oxidative stress. These functions might be dependent on each isozyme/isoform in each plant tissue. This chain is Peroxidase 66 (PER66), found in Zea mays (Maize).